We begin with the raw amino-acid sequence, 616 residues long: Proline--tRNA ligase (616 aa).

Belongs to the class-II aminoacyl-tRNA synthetase family. ProS type 1 subfamily. Homodimer.

Its subcellular location is the cytoplasm. It carries out the reaction tRNA(Pro) + L-proline + ATP = L-prolyl-tRNA(Pro) + AMP + diphosphate. Its function is as follows. Catalyzes the attachment of proline to tRNA(Pro) in a two-step reaction: proline is first activated by ATP to form Pro-AMP and then transferred to the acceptor end of tRNA(Pro). As ProRS can inadvertently accommodate and process non-cognate amino acids such as alanine and cysteine, to avoid such errors it has two additional distinct editing activities against alanine. One activity is designated as 'pretransfer' editing and involves the tRNA(Pro)-independent hydrolysis of activated Ala-AMP. The other activity is designated 'posttransfer' editing and involves deacylation of mischarged Ala-tRNA(Pro). The misacylated Cys-tRNA(Pro) is not edited by ProRS. This Lactococcus lactis subsp. cremoris (strain MG1363) protein is Proline--tRNA ligase.